The chain runs to 311 residues: HPr kinase/phosphorylase (311 aa).

Residues H138 and K159 contribute to the active site. An ATP-binding site is contributed by 153–160 (GDSGIGKS). Residue S160 coordinates Mg(2+). The active-site Proton acceptor; for phosphorylation activity. Proton donor; for dephosphorylation activity is D177. The segment at 201 to 210 (IEIRGVGIID) is important for the catalytic mechanism of both phosphorylation and dephosphorylation. E202 contributes to the Mg(2+) binding site. The active site involves R243. The tract at residues 264–269 (PVKTGR) is important for the catalytic mechanism of dephosphorylation.

The protein belongs to the HPrK/P family. Homohexamer. Requires Mg(2+) as cofactor.

The catalysed reaction is [HPr protein]-L-serine + ATP = [HPr protein]-O-phospho-L-serine + ADP + H(+). The enzyme catalyses [HPr protein]-O-phospho-L-serine + phosphate + H(+) = [HPr protein]-L-serine + diphosphate. Functionally, catalyzes the ATP- as well as the pyrophosphate-dependent phosphorylation of a specific serine residue in HPr, a phosphocarrier protein of the phosphoenolpyruvate-dependent sugar phosphotransferase system (PTS). HprK/P also catalyzes the pyrophosphate-producing, inorganic phosphate-dependent dephosphorylation (phosphorolysis) of seryl-phosphorylated HPr (P-Ser-HPr). The two antagonistic activities of HprK/P are regulated by several intracellular metabolites, which change their concentration in response to the absence or presence of rapidly metabolisable carbon sources (glucose, fructose, etc.) in the growth medium. Therefore, by controlling the phosphorylation state of HPr, HPrK/P is a sensor enzyme that plays a major role in the regulation of carbon metabolism and sugar transport: it mediates carbon catabolite repression (CCR), and regulates PTS-catalyzed carbohydrate uptake and inducer exclusion. In Streptococcus pneumoniae serotype 2 (strain D39 / NCTC 7466), this protein is HPr kinase/phosphorylase.